The following is a 1353-amino-acid chain: ABC-type transporter MYCGRDRAFT_41235 (1353 aa).

Residues 40 to 60 (ASASLWNWFFFSWLNPLIAIG) form a helical membrane-spanning segment. The N-linked (GlcNAc...) asparagine glycan is linked to asparagine 121. 6 consecutive transmembrane segments (helical) span residues 124–144 (VLVWFWVGGAMKLFADVATIT), 172–192 (IGQGFGMAIGLALLLASGVMA), 250–270 (FACGYFHATWTSVIQILICLG), 271–291 (LTIASLGPAALTGFGLMAILV), 364–384 (VALSFSVPTLAAVVSFVTYAA), and 397–417 (ALTLFMLLRTPLLLLPVAFGA). The ABC transmembrane type-1 1 domain maps to 129 to 420 (WVGGAMKLFA…LPVAFGAAAD (292 aa)). The ABC transporter 1 domain occupies 460–684 (YRVQDHSDEK…EGGQMRRVVE (225 aa)). Asparagine 481 is a glycosylation site (N-linked (GlcNAc...) asparagine). 496-503 (GPVGAGKS) lines the ATP pocket. The interval 687 to 720 (ASKSSAEEEEVEDGDLKDGVPSTDGGDASQTTSN) is disordered. Helical transmembrane passes span 748–768 (PAFTLTFFILSMLIFQGGSIL), 796–816 (LGVSQAIGLLAMSSIFGFFIF), 864–882 (AFRMLLSTVAQVVGAVVLI), 888–907 (WFLLAVFVIVILYILTGMYY), 973–993 (LSVRLDLLGTCLVLLVGLIVV), and 1002–1022 (AQGGVALSYIVTVQAVFGFMI). Positions 756–1030 (ILSMLIFQGG…MIRQSAEIEN (275 aa)) constitute an ABC transmembrane type-1 2 domain. One can recognise an ABC transporter 2 domain in the interval 1070–1334 (IEMRDVVFTH…EGGHFRSLCS (265 aa)). 1104-1111 (GRTGSGKS) provides a ligand contact to ATP. Residues 1191-1200 (QSSAETLTSS) show a composition bias toward polar residues. Residues 1191–1223 (QSSAETLTSSDQEKSSPDDAAISPSSHSHSQHL) form a disordered region. Residues 1208–1218 (DDAAISPSSHS) show a composition bias toward low complexity.

Belongs to the ABC transporter superfamily. ABCC family. Conjugate transporter (TC 3.A.1.208) subfamily.

The protein resides in the cell membrane. Multidrug resistance protein; part of the gene cluster 14 that mediates the biosynthesis of a ferrichrome A-like siderophors which may contribute to organismal virulence. The chain is ABC-type transporter MYCGRDRAFT_41235 from Zymoseptoria tritici (strain CBS 115943 / IPO323) (Speckled leaf blotch fungus).